Here is a 1377-residue protein sequence, read N- to C-terminus: DNA-directed RNA polymerase subunit beta' (1377 aa).

Residues cysteine 70, cysteine 72, cysteine 85, and cysteine 88 each coordinate Zn(2+). Mg(2+) is bound by residues aspartate 460, aspartate 462, and aspartate 464. Residues cysteine 808, cysteine 882, cysteine 889, and cysteine 892 each coordinate Zn(2+).

It belongs to the RNA polymerase beta' chain family. As to quaternary structure, the RNAP catalytic core consists of 2 alpha, 1 beta, 1 beta' and 1 omega subunit. When a sigma factor is associated with the core the holoenzyme is formed, which can initiate transcription. Mg(2+) serves as cofactor. It depends on Zn(2+) as a cofactor.

The catalysed reaction is RNA(n) + a ribonucleoside 5'-triphosphate = RNA(n+1) + diphosphate. Functionally, DNA-dependent RNA polymerase catalyzes the transcription of DNA into RNA using the four ribonucleoside triphosphates as substrates. The sequence is that of DNA-directed RNA polymerase subunit beta' from Geotalea uraniireducens (strain Rf4) (Geobacter uraniireducens).